We begin with the raw amino-acid sequence, 338 residues long: Probable cytosolic iron-sulfur protein assembly protein Ciao1 (338 aa).

WD repeat units lie at residues 12 to 51, 58 to 97, 102 to 141, 147 to 186, 193 to 232, 234 to 252, 253 to 291, and 302 to 338; these read GHRG…RWVP, GHTR…FECN, GHEN…EYEC, THSQ…SDWS, SHDS…NEFG, ACPD…LSGF, HSRA…PANE, and AHSQ…EDDE.

This sequence belongs to the WD repeat CIA1 family.

Essential component of the cytosolic iron-sulfur (Fe/S) protein assembly machinery. Required for the maturation of extramitochondrial Fe/S proteins. This is Probable cytosolic iron-sulfur protein assembly protein Ciao1 from Culex quinquefasciatus (Southern house mosquito).